Here is a 186-residue protein sequence, read N- to C-terminus: Homeobox expressed in ES cells 1 (186 aa).

Residues 109–168 constitute a DNA-binding region (homeobox); it reads GRRPRTAFTRSQIEILENVFRVNSYPGIDIREELAGKLALDEDRIQIWFQNRRAKLKRSH.

Belongs to the ANF homeobox family. Interacts (via N-terminus) with zyx.

The protein localises to the nucleus. Regulates the earliest stages of development of the anterior neural plate. Plays a role in forebrain development by inhibiting the expression of otx2 and pax6 in the rostral region of the anterior neural plate. Necessary for both neural differentiation and neural patterning. Controls Spemann organizer development. May act as a transcriptional repressor. The chain is Homeobox expressed in ES cells 1 from Xenopus tropicalis (Western clawed frog).